Reading from the N-terminus, the 329-residue chain is Ketol-acid reductoisomerase (NADP(+)) (329 aa).

The KARI N-terminal Rossmann domain maps to 1–181 (MKIYYDQDAD…GGTRGGVLTT (181 aa)). NADP(+)-binding positions include 24 to 27 (YGSQ), Arg-47, and 82 to 85 (DQHQ). His-107 is a catalytic residue. Residue Gly-133 coordinates NADP(+). One can recognise a KARI C-terminal knotted domain in the interval 182–327 (TFKEETETDL…AKLRGMMSWL (146 aa)). Asp-190, Glu-194, Glu-226, and Glu-230 together coordinate Mg(2+). Substrate is bound at residue Ser-251.

Belongs to the ketol-acid reductoisomerase family. Requires Mg(2+) as cofactor.

It catalyses the reaction (2R)-2,3-dihydroxy-3-methylbutanoate + NADP(+) = (2S)-2-acetolactate + NADPH + H(+). The catalysed reaction is (2R,3R)-2,3-dihydroxy-3-methylpentanoate + NADP(+) = (S)-2-ethyl-2-hydroxy-3-oxobutanoate + NADPH + H(+). It participates in amino-acid biosynthesis; L-isoleucine biosynthesis; L-isoleucine from 2-oxobutanoate: step 2/4. Its pathway is amino-acid biosynthesis; L-valine biosynthesis; L-valine from pyruvate: step 2/4. Functionally, involved in the biosynthesis of branched-chain amino acids (BCAA). Catalyzes an alkyl-migration followed by a ketol-acid reduction of (S)-2-acetolactate (S2AL) to yield (R)-2,3-dihydroxy-isovalerate. In the isomerase reaction, S2AL is rearranged via a Mg-dependent methyl migration to produce 3-hydroxy-3-methyl-2-ketobutyrate (HMKB). In the reductase reaction, this 2-ketoacid undergoes a metal-dependent reduction by NADPH to yield (R)-2,3-dihydroxy-isovalerate. This Solidesulfovibrio magneticus (strain ATCC 700980 / DSM 13731 / RS-1) (Desulfovibrio magneticus) protein is Ketol-acid reductoisomerase (NADP(+)).